We begin with the raw amino-acid sequence, 250 residues long: Ribosomal RNA-processing protein 15 (250 aa).

The segment covering 1 to 27 (MGSKHRVDTKDKKRTRKNAEFGREKRN) has biased composition (basic and acidic residues). The tract at residues 1–101 (MGSKHRVDTK…NSKHDDGSTG (101 aa)) is disordered. Composition is skewed to acidic residues over residues 43-53 (MEGDEAEEDEQ) and 67-83 (EQSD…EDDD). At Ser-69 the chain carries Phosphoserine.

The protein belongs to the RRP15 family.

It localises to the nucleus. The protein resides in the nucleolus. Its function is as follows. Constituent of pre-60S ribosomal particles. Required for large subunit rRNA maturation, in particular processing of the 27S pre-rRNA at the A3 and B1 sites to yield 5.8S and 25S rRNA. This chain is Ribosomal RNA-processing protein 15, found in Saccharomyces cerevisiae (strain ATCC 204508 / S288c) (Baker's yeast).